A 334-amino-acid polypeptide reads, in one-letter code: O-methyltransferase SfmM3 (334 aa).

Residues Asp190 and 216-218 (GDF) contribute to the S-adenosyl-L-methionine site. His236 serves as the catalytic Proton acceptor.

Belongs to the class I-like SAM-binding methyltransferase superfamily. Cation-independent O-methyltransferase family. COMT subfamily.

The enzyme catalyses 5-hydroxy-3-methyl-L-tyrosine + S-adenosyl-L-methionine = 5-hydroxy-3-methyl-O-methyl-L-tyrosine + S-adenosyl-L-homocysteine + H(+). It functions in the pathway antibiotic biosynthesis. In terms of biological role, O-methyltransferase that mediates the methylation of 3-hydroxy-5-methyl-L-tyrosine (3-OH-5-Me-Tyr) into 3-hydroxy-5-methyl-O-methyltyrosine (3-OH-5-Me-OMe-Tyr), a core structure of saframycin A, a potent antitumor antibiotic that belongs to the tetrahydroisoquinoline family. The polypeptide is O-methyltransferase SfmM3 (Streptomyces lavendulae).